Reading from the N-terminus, the 110-residue chain is Small ribosomal subunit protein uS10 (110 aa).

This sequence belongs to the universal ribosomal protein uS10 family. As to quaternary structure, part of the 30S ribosomal subunit.

Its function is as follows. Involved in the binding of tRNA to the ribosomes. This chain is Small ribosomal subunit protein uS10, found in Coxiella burnetii (strain Dugway 5J108-111).